Reading from the N-terminus, the 400-residue chain is Homoserine O-acetyltransferase (400 aa).

In terms of domain architecture, AB hydrolase-1 spans 64-374; that stretch reads NAILVCHALT…DKGHDAFLLD (311 aa). The Nucleophile role is filled by Ser169. Arg239 lines the substrate pocket. Catalysis depends on residues Asp335 and His368. Asp369 lines the substrate pocket.

Belongs to the AB hydrolase superfamily. MetX family. As to quaternary structure, homodimer.

The protein resides in the cytoplasm. It catalyses the reaction L-homoserine + acetyl-CoA = O-acetyl-L-homoserine + CoA. Its pathway is amino-acid biosynthesis; L-methionine biosynthesis via de novo pathway; O-acetyl-L-homoserine from L-homoserine: step 1/1. Transfers an acetyl group from acetyl-CoA to L-homoserine, forming acetyl-L-homoserine. The polypeptide is Homoserine O-acetyltransferase (Rhodopseudomonas palustris (strain ATCC BAA-98 / CGA009)).